Consider the following 319-residue polypeptide: Homoserine kinase (319 aa).

100-110 (PLSSGMGSSAS) is an ATP binding site.

This sequence belongs to the GHMP kinase family. Homoserine kinase subfamily.

The protein resides in the cytoplasm. It catalyses the reaction L-homoserine + ATP = O-phospho-L-homoserine + ADP + H(+). The protein operates within amino-acid biosynthesis; L-threonine biosynthesis; L-threonine from L-aspartate: step 4/5. Catalyzes the ATP-dependent phosphorylation of L-homoserine to L-homoserine phosphate. This is Homoserine kinase from Chloroherpeton thalassium (strain ATCC 35110 / GB-78).